The primary structure comprises 272 residues: MKRTAFFISDGTGITAETLGQSLLAQFENIQFTKLTRPYIDSIDKARAMVQQIDAAAERDGARPIIFDTIVNRDIRAILDTANGFMIDIFSTFLSPLEQELSSHSSYSVGKSHSIGQHSNYMERIEAVNFALDNDDGARTHYYDKADLILVGVSRCGKTPTCLYMAMQYGIRAANYPLTEDDMERLQLPDSLKKHRDKLFGLTIDPDRLTAIRHERKPNSRYASFAQCEFEVREVENLFRRENIAFINSTHFSVEEISAKILVEKGVERRLK.

Position 152–159 (Gly-152–Thr-159) interacts with ADP.

It belongs to the pyruvate, phosphate/water dikinase regulatory protein family. PSRP subfamily.

The catalysed reaction is [pyruvate, water dikinase] + ADP = [pyruvate, water dikinase]-phosphate + AMP + H(+). It catalyses the reaction [pyruvate, water dikinase]-phosphate + phosphate + H(+) = [pyruvate, water dikinase] + diphosphate. In terms of biological role, bifunctional serine/threonine kinase and phosphorylase involved in the regulation of the phosphoenolpyruvate synthase (PEPS) by catalyzing its phosphorylation/dephosphorylation. This Ectopseudomonas mendocina (strain ymp) (Pseudomonas mendocina) protein is Putative phosphoenolpyruvate synthase regulatory protein.